The primary structure comprises 428 residues: Peptidase B (428 aa).

The Mn(2+) site is built by K195 and D200. K207 is a catalytic residue. Mn(2+)-binding residues include D218, D277, and E279. Residue R281 is part of the active site.

Belongs to the peptidase M17 family. In terms of assembly, homohexamer. Requires Mn(2+) as cofactor.

The protein resides in the cytoplasm. The enzyme catalyses Release of an N-terminal amino acid, Xaa, from a peptide or arylamide. Xaa is preferably Glu or Asp but may be other amino acids, including Leu, Met, His, Cys and Gln.. In terms of biological role, probably plays an important role in intracellular peptide degradation. The chain is Peptidase B from Klebsiella pneumoniae (strain 342).